The sequence spans 484 residues: Hemogen (484 aa).

Residues 1–25 (MDLGKDQSHLKHHQTPDPHQEENHS) are compositionally biased toward basic and acidic residues. 2 disordered regions span residues 1–32 (MDLG…IGTW) and 44–91 (KAEV…PQPQ). The necessary for nuclear localization stretch occupies residues 7–87 (QSHLKHHQTP…RQQNTELKVE (81 aa)). Residues 61–79 (KKRKQQRTGKGNRRGRKRQ) show a composition bias toward basic residues. Ser123, Ser159, Ser181, Ser188, and Ser201 each carry phosphoserine. Thr246 carries the phosphothreonine modification. Disordered regions lie at residues 265-290 (DVPK…TDQG), 306-369 (EPKD…YSPE), and 386-471 (QETS…ILNE). Positions 306 to 320 (EPKDLSTKTHQESAE) are enriched in basic and acidic residues. Residues Ser349 and Ser353 each carry the phosphoserine modification. Thr360 carries the phosphothreonine modification. Phosphoserine is present on residues Ser363 and Ser367. Basic and acidic residues-rich tracts occupy residues 413–428 (YKNK…EPHQ), 438–447 (PKAHQEDAKD), and 454–463 (EMKEKPKEEP).

As to expression, expressed in hematopoietic precursor cells, thyroid and spermatids (at protein level). Expressed in bone marrow, testis, thymus. Expressed in prostate cancer and ovarian cancer. Also expressed in thymus and thyroid tumors, non-Hodgkin lymphoma, various leukemia cell lines, peripheral blood mononuclear cells (PBMCs) and bone marrow mononuclear cells (BMMCs) of patients with leukemia.

Its subcellular location is the nucleus. In terms of biological role, regulates the proliferation and differentiation of hematopoietic cells. Overexpression block the TPA-induced megakaryocytic differentiation in the K562 cell model. May also prevent cell apoptosis through the activation of the nuclear factor-kappa B (NF-kB). This is Hemogen (HEMGN) from Homo sapiens (Human).